Here is a 242-residue protein sequence, read N- to C-terminus: Ferritin, mitochondrial (242 aa).

Residues 1 to 49 constitute a mitochondrion transit peptide; sequence MLPCSLFLPKHISTSLVFLRSARHGFALLPRWVPRLSSDYPPAAPIRLL. One can recognise a Ferritin-like diiron domain in the interval 70–219; the sequence is QNFHPDSEAA…DHVNNLVKMG (150 aa). Fe cation contacts are provided by glutamate 87, glutamate 122, histidine 125, glutamate 167, and glutamine 201.

It belongs to the ferritin family. In terms of assembly, homooligomer of 24 subunits. The functional molecule is roughly spherical and contains a central cavity into which the polymeric mineral iron core is deposited.

It localises to the mitochondrion. The enzyme catalyses 4 Fe(2+) + O2 + 4 H(+) = 4 Fe(3+) + 2 H2O. Its function is as follows. Catalyzes the oxidation of ferrous iron(II) to ferric iron(III) and stores iron in a soluble, non-toxic, readily available form. Important for iron homeostasis. Iron is taken up in the ferrous form and deposited as ferric hydroxides after oxidation. This chain is Ferritin, mitochondrial, found in Bos taurus (Bovine).